A 243-amino-acid chain; its full sequence is Ubiquinone/menaquinone biosynthesis C-methyltransferase UbiE (243 aa).

S-adenosyl-L-methionine is bound by residues Thr-69, Asp-90, and Asp-116–Ala-117.

Belongs to the class I-like SAM-binding methyltransferase superfamily. MenG/UbiE family.

It carries out the reaction a 2-demethylmenaquinol + S-adenosyl-L-methionine = a menaquinol + S-adenosyl-L-homocysteine + H(+). It catalyses the reaction a 2-methoxy-6-(all-trans-polyprenyl)benzene-1,4-diol + S-adenosyl-L-methionine = a 5-methoxy-2-methyl-3-(all-trans-polyprenyl)benzene-1,4-diol + S-adenosyl-L-homocysteine + H(+). It participates in quinol/quinone metabolism; menaquinone biosynthesis; menaquinol from 1,4-dihydroxy-2-naphthoate: step 2/2. Its pathway is cofactor biosynthesis; ubiquinone biosynthesis. Functionally, methyltransferase required for the conversion of demethylmenaquinol (DMKH2) to menaquinol (MKH2) and the conversion of 2-polyprenyl-6-methoxy-1,4-benzoquinol (DDMQH2) to 2-polyprenyl-3-methyl-6-methoxy-1,4-benzoquinol (DMQH2). This Cupriavidus taiwanensis (strain DSM 17343 / BCRC 17206 / CCUG 44338 / CIP 107171 / LMG 19424 / R1) (Ralstonia taiwanensis (strain LMG 19424)) protein is Ubiquinone/menaquinone biosynthesis C-methyltransferase UbiE.